A 180-amino-acid chain; its full sequence is O-acetyl-ADP-ribose deacetylase (180 aa).

In terms of domain architecture, Macro spans 1–175; that stretch reads MSGRINVVQG…LYQRLLGQYD (175 aa). Residues 11-12, N25, 33-35, and 122-126 contribute to the substrate site; these read DI, GVD, and STGIY. Residue D35 is the Proton acceptor of the active site.

It belongs to the MacroD-type family. YmdB subfamily. In terms of assembly, homodimer. Interacts with RNase III.

The enzyme catalyses 3''-O-acetyl-ADP-D-ribose + H2O = ADP-D-ribose + acetate + H(+). The catalysed reaction is 2''-O-acetyl-ADP-D-ribose + H2O = ADP-D-ribose + acetate + H(+). Deacetylates O-acetyl-ADP ribose to yield ADP-ribose and free acetate. Down-regulates ribonuclease 3 (RNase III) activity. Acts by interacting directly with the region of the ribonuclease that is required for dimerization/activation. This chain is O-acetyl-ADP-ribose deacetylase, found in Cronobacter sakazakii (strain ATCC BAA-894) (Enterobacter sakazakii).